The chain runs to 336 residues: MKSAKKLLSVLCLGIFILTFTACDMVEKTPEAKAKSTIAKVNGEKIQRKDLDESPSMQQVLSQIKTQYGEEFEKSEQGKEVIKEQKKQILENLITEKVLLQKGKELKVIPKDEELNKEADKKVNEIKAVYNNDEKKFEETLKSTGFTKETLKEYLRDQIVIEKVINEVTKDVKVEDKDAQKYYNENQSMFTEKPNTMNVSHILVKTEDEAKKVKKRLDAKEDFAKVAKEVSQDPGSKDKGGLLGDISYSDSNYDPTFMKAAIALKEGTISNPVHTQWGYHIIKVNSKKEYPVKKFDSVKEDIKKQLKQEKQQEAYTKKIEEWKKASKIKTYEKNLL.

An N-terminal signal peptide occupies residues 1 to 22 (MKSAKKLLSVLCLGIFILTFTA). Cys23 carries N-palmitoyl cysteine lipidation. A lipid anchor (S-diacylglycerol cysteine) is attached at Cys23. Residues 194 to 286 (PNTMNVSHIL…WGYHIIKVNS (93 aa)) enclose the PpiC domain.

This sequence belongs to the PrsA family.

The protein localises to the cell membrane. It carries out the reaction [protein]-peptidylproline (omega=180) = [protein]-peptidylproline (omega=0). Plays a major role in protein secretion by helping the post-translocational extracellular folding of several secreted proteins. This is Foldase protein PrsA from Clostridium botulinum (strain ATCC 19397 / Type A).